The chain runs to 578 residues: Glucans biosynthesis protein G (578 aa).

The signal sequence occupies residues 1–37 (MIVSPCIAPRIPGTRLRKAMLAGVALVGLLSAGQLWA). A disordered region spans residues 511–578 (VPVEAPKPAK…TWSYQLPADE (68 aa)). The span at 517–543 (KPAKDSKQDKAAAKHAHAKAEKAKAEQ) shows a compositional bias: basic and acidic residues. The span at 544-554 (PAEQPAADAAS) shows a compositional bias: low complexity.

It belongs to the OpgD/OpgG family.

The protein localises to the periplasm. Its pathway is glycan metabolism; osmoregulated periplasmic glucan (OPG) biosynthesis. Its function is as follows. Involved in the biosynthesis of osmoregulated periplasmic glucans (OPGs). The chain is Glucans biosynthesis protein G from Pseudomonas entomophila (strain L48).